Reading from the N-terminus, the 205-residue chain is Large ribosomal subunit protein uL10 (205 aa).

Residues 167–205 (AQGAAPAEAKAEAPASEEKAADTPAEQPAESAPEAAPEA) are disordered. Composition is skewed to low complexity over residues 169-180 (GAAPAEAKAEAP) and 190-205 (PAEQ…APEA).

Belongs to the universal ribosomal protein uL10 family. Part of the ribosomal stalk of the 50S ribosomal subunit. The N-terminus interacts with L11 and the large rRNA to form the base of the stalk. The C-terminus forms an elongated spine to which L12 dimers bind in a sequential fashion forming a multimeric L10(L12)X complex.

In terms of biological role, forms part of the ribosomal stalk, playing a central role in the interaction of the ribosome with GTP-bound translation factors. This chain is Large ribosomal subunit protein uL10, found in Treponema denticola (strain ATCC 35405 / DSM 14222 / CIP 103919 / JCM 8153 / KCTC 15104).